A 694-amino-acid chain; its full sequence is MSARRSANFVNTSVTTHELVEFEVPAGIAIGQAMRELNLPNKGDDAIVCAKDTEGQLKDLSHVPEETATFTAVPANSEDGRAVIRHSCAHVLAQAVQAEFPGTKLGIGPAIENGFYYDFDVAEPFTPEDLKTIEKRMKKIIKTGQKFERRVYESTEAAAAELADEPYKLELIQDKGNVDPDSDEATEVGAGELTAYDNVNPRTNEVEWSDLCRGPHIPTTRYIPAFALTRSSAAYWRGDQTNAGLQRIYGTAWESKEKLDEYQTMLAEAEKRDHRRLGTELDLFSFPDEIGSGLPVFHPNGAIVRLEMEEHSRRRHIQAGYSFVNTPHATKSDLFEKSGHLGFYKEGMFPPLQLDAEYDAEGNQTKPGQDYYLKPMNCPMHNLIFDSRGRSYRELPLRLFEFGTVYRYEKSGVVHGLTRARGFTQDDAHIYCTEDQLEEELTSVLEFIISLLKDYGLDDFYLELSTKDPKKFVGDDEIWERSTEILQRVATNSGLDLVPDPEGAAFYGPKISVQAKDAIGRTWQMSTVQLDFNLPERFELEYTSPDGSKQRPIMIHRALFGSIERFFGVLLEHYAGAFPAWLAPHQVVGIPVAEDFIPHLEKVVDKLRARGFRAEVDTSDDRMQKKIRTHTTGKIPFMLLAGGRDVEADAVSFRFLDGTQVNGVPVDEAVELISTWILERNNTQPSEETIAALR.

The 67-residue stretch at 8–74 (NFVNTSVTTH…EETATFTAVP (67 aa)) folds into the TGS domain. Positions 273–579 (DHRRLGTELD…LLEHYAGAFP (307 aa)) are catalytic. Zn(2+) is bound by residues Cys-378, His-429, and His-556.

This sequence belongs to the class-II aminoacyl-tRNA synthetase family. Homodimer. It depends on Zn(2+) as a cofactor.

Its subcellular location is the cytoplasm. It carries out the reaction tRNA(Thr) + L-threonine + ATP = L-threonyl-tRNA(Thr) + AMP + diphosphate + H(+). Its function is as follows. Catalyzes the attachment of threonine to tRNA(Thr) in a two-step reaction: L-threonine is first activated by ATP to form Thr-AMP and then transferred to the acceptor end of tRNA(Thr). Also edits incorrectly charged L-seryl-tRNA(Thr). The sequence is that of Threonine--tRNA ligase from Corynebacterium efficiens (strain DSM 44549 / YS-314 / AJ 12310 / JCM 11189 / NBRC 100395).